Reading from the N-terminus, the 296-residue chain is Probable endonuclease 4 (296 aa).

Zn(2+)-binding residues include histidine 68, histidine 109, glutamate 144, aspartate 178, histidine 181, histidine 213, aspartate 226, histidine 228, and glutamate 258.

This sequence belongs to the AP endonuclease 2 family. It depends on Zn(2+) as a cofactor.

It carries out the reaction Endonucleolytic cleavage to 5'-phosphooligonucleotide end-products.. In terms of biological role, endonuclease IV plays a role in DNA repair. It cleaves phosphodiester bonds at apurinic or apyrimidinic (AP) sites, generating a 3'-hydroxyl group and a 5'-terminal sugar phosphate. In Staphylococcus aureus (strain MRSA252), this protein is Probable endonuclease 4.